Reading from the N-terminus, the 506-residue chain is Maturase K (506 aa).

This sequence belongs to the intron maturase 2 family. MatK subfamily.

The protein resides in the plastid. It localises to the chloroplast. Its function is as follows. Usually encoded in the trnK tRNA gene intron. Probably assists in splicing its own and other chloroplast group II introns. The polypeptide is Maturase K (Austrosteenisia blackii (Blood vine)).